The primary structure comprises 387 residues: MASILQAIRYSRGKLAIIDQLQLPYVEKFITIQTPEDAWHAIKEMRVRGAPAIAIVAALALASELNTLIVHDKLSSGAEEVKLFIREKLDYLVSSRPTAVNLSDAARKLESTISDHADTPGATGRTVAEAFIRAAEDMMTKDLDDNMRIGKNGAEWIIKHALAARKSTATVLTHCNTGSLATSGYGTALGVIRALASKKALEHAYCTETRPYNQGSRLTAFELVHDRLPATLITDSMVAALLANTKAEVDAIVVGADRVAANGDTANKIGTYGLAVLAKYHGVKFLVAAPLTTIDLGTKSGEDIVIEERPAAEVTKIRGPVDGDHSADIVKLETVHIAAKGINVWNPAFDVTPSTLIDGIITEVGVIEKGTDGQFHLERLFIDNSAS.

The active-site Proton donor is the Asp257.

Belongs to the eIF-2B alpha/beta/delta subunits family. MtnA subfamily.

It is found in the cytoplasm. It localises to the nucleus. It carries out the reaction 5-(methylsulfanyl)-alpha-D-ribose 1-phosphate = 5-(methylsulfanyl)-D-ribulose 1-phosphate. The protein operates within amino-acid biosynthesis; L-methionine biosynthesis via salvage pathway; L-methionine from S-methyl-5-thio-alpha-D-ribose 1-phosphate: step 1/6. Functionally, catalyzes the interconversion of methylthioribose-1-phosphate (MTR-1-P) into methylthioribulose-1-phosphate (MTRu-1-P). The sequence is that of Methylthioribose-1-phosphate isomerase (mri1) from Neosartorya fischeri (strain ATCC 1020 / DSM 3700 / CBS 544.65 / FGSC A1164 / JCM 1740 / NRRL 181 / WB 181) (Aspergillus fischerianus).